The following is a 129-amino-acid chain: UPF0344 protein USA300HOU_0928 (129 aa).

The next 4 helical transmembrane spans lie at 1-21, 36-56, 67-87, and 99-119; these read MLHL…ATYL, LHMI…WILI, MLLT…EVSI, and MFWI…ILPL.

This sequence belongs to the UPF0344 family.

The protein localises to the cell membrane. The polypeptide is UPF0344 protein USA300HOU_0928 (Staphylococcus aureus (strain USA300 / TCH1516)).